The primary structure comprises 333 residues: Complement C1q and tumor necrosis factor-related protein 9A (333 aa).

An N-terminal signal peptide occupies residues 1-19 (MRIWWLLLAIEICTGNINS). Collagen-like domains follow at residues 24 to 82 (RQGH…DGKV), 95 to 154 (GSPG…PGPM), and 155 to 191 (GPIGKPGPKGEAGPTGPQGEPGVRGIRGWKGDRGEKG). The segment at 24-188 (RQGHPGIPGN…GIRGWKGDRG (165 aa)) is disordered. The span at 26 to 40 (GHPGIPGNPGHNGLP) shows a compositional bias: low complexity. Residues Pro-31, Pro-34, and Pro-40 each carry the 4-hydroxyproline modification. Basic and acidic residues predominate over residues 42–57 (RDGRDGAKGDKGDAGE). 4-hydroxyproline occurs at positions 58, 61, and 64. Residues 69–88 (TSGEKGERGADGKVEAKGIK) show a composition bias toward basic and acidic residues. 5-hydroxylysine is present on residues Lys-73 and Lys-127. 2 O-linked (Gal...) hydroxylysine glycosylation sites follow: Lys-73 and Lys-127. 4-hydroxyproline is present on residues Pro-151, Pro-160, and Pro-175. Residues 197–333 (LVLPKSAFTV…FTGFLLFSSP (137 aa)) enclose the C1q domain.

Multimers (predominantly trimers). Interacts with ADIPOQ via the C1q domain to form a heterotrimeric complex. Interacts with CTRP9B. Forms heterotrimers and heterooligomeric complexes with CTRP9B. As to expression, expressed predominantly in adipose tissue.

The protein localises to the secreted. Its function is as follows. Probable adipokine. Activates AMPK, AKT, and p44/42 MAPK signaling pathways. This chain is Complement C1q and tumor necrosis factor-related protein 9A (C1QTNF9), found in Homo sapiens (Human).